The sequence spans 183 residues: Glutathione-regulated potassium-efflux system ancillary protein KefG (183 aa).

Belongs to the NAD(P)H dehydrogenase (quinone) family. KefG subfamily. As to quaternary structure, interacts with KefB.

It is found in the cell inner membrane. The enzyme catalyses a quinone + NADH + H(+) = a quinol + NAD(+). It catalyses the reaction a quinone + NADPH + H(+) = a quinol + NADP(+). Its function is as follows. Regulatory subunit of a potassium efflux system that confers protection against electrophiles. Required for full activity of KefB. The protein is Glutathione-regulated potassium-efflux system ancillary protein KefG of Salmonella enteritidis PT4 (strain P125109).